The following is a 367-amino-acid chain: Probable sugar phosphate/phosphate translocator At1g48230 (367 aa).

A run of 10 helical transmembrane segments spans residues 9 to 29 (LVLTYIYLLIYIILSSGVILY), 43 to 63 (LPITLTMIHMGFSGFVAFLLI), 76 to 96 (FEIYVTCVVPISAFFASSLWF), 106 to 126 (VAFIQMLKALMPVATFLMAVV), 140 to 160 (MVLVSVGVVVSSYGEINFNVI), 163 to 183 (VYQVMGIFAEALRLVLTQVLL), 193 to 213 (VTSLYYIAPCSFVFLSLPWYV), 229 to 249 (WIFFSNALCALALNFSIFLVI), 257 to 276 (IRVAGVLKDWILIALSTVIF), and 280 to 302 (TITGLNITGYAIALCGVVMYNYI). Residues 321–330 (ITKDWKEKNS) show a composition bias toward basic and acidic residues. A disordered region spans residues 321 to 341 (ITKDWKEKNSSDGGSPRGLEL).

It belongs to the TPT transporter family. TPT (TC 2.A.7.9) subfamily.

It localises to the membrane. The chain is Probable sugar phosphate/phosphate translocator At1g48230 from Arabidopsis thaliana (Mouse-ear cress).